The sequence spans 99 residues: MNPENYLYLSVLLFTIGAAGVLLRRNAIVVFMCIELMLNAANLAFVTFARMHGNLDGQIFAFFTMVVAAAEVVVGLAIIMIIFRSRRSVSVDDADLLKY.

3 helical membrane passes run 3-23 (PENY…GVLL), 28-48 (IVVF…FVTF), and 62-82 (FFTM…IMII).

It belongs to the complex I subunit 4L family. As to quaternary structure, NDH-1 is composed of 14 different subunits. Subunits NuoA, H, J, K, L, M, N constitute the membrane sector of the complex.

The protein localises to the cell membrane. It catalyses the reaction a quinone + NADH + 5 H(+)(in) = a quinol + NAD(+) + 4 H(+)(out). NDH-1 shuttles electrons from NADH, via FMN and iron-sulfur (Fe-S) centers, to quinones in the respiratory chain. The immediate electron acceptor for the enzyme in this species is believed to be a menaquinone. Couples the redox reaction to proton translocation (for every two electrons transferred, four hydrogen ions are translocated across the cytoplasmic membrane), and thus conserves the redox energy in a proton gradient. The chain is NADH-quinone oxidoreductase subunit K from Rhodococcus erythropolis (strain PR4 / NBRC 100887).